A 145-amino-acid polypeptide reads, in one-letter code: Large ribosomal subunit protein uL11 (145 aa).

This sequence belongs to the universal ribosomal protein uL11 family. Part of the ribosomal stalk of the 50S ribosomal subunit. Interacts with L10 and the large rRNA to form the base of the stalk. L10 forms an elongated spine to which L12 dimers bind in a sequential fashion forming a multimeric L10(L12)X complex. One or more lysine residues are methylated.

Forms part of the ribosomal stalk which helps the ribosome interact with GTP-bound translation factors. This Rickettsia prowazekii (strain Madrid E) protein is Large ribosomal subunit protein uL11.